The chain runs to 688 residues: DNA ligase (688 aa).

Residues 38–42, 87–88, and glutamate 118 contribute to the NAD(+) site; these read DEEYD and SL. Lysine 120 serves as the catalytic N6-AMP-lysine intermediate. NAD(+) contacts are provided by arginine 141, glutamate 175, lysine 291, and lysine 315. Zn(2+) is bound by residues cysteine 409, cysteine 412, cysteine 428, and cysteine 433. One can recognise a BRCT domain in the interval 590 to 679; the sequence is VKLDILRGLT…AELKGYNFDE (90 aa).

The protein belongs to the NAD-dependent DNA ligase family. LigA subfamily. It depends on Mg(2+) as a cofactor. Requires Mn(2+) as cofactor.

It carries out the reaction NAD(+) + (deoxyribonucleotide)n-3'-hydroxyl + 5'-phospho-(deoxyribonucleotide)m = (deoxyribonucleotide)n+m + AMP + beta-nicotinamide D-nucleotide.. In terms of biological role, DNA ligase that catalyzes the formation of phosphodiester linkages between 5'-phosphoryl and 3'-hydroxyl groups in double-stranded DNA using NAD as a coenzyme and as the energy source for the reaction. It is essential for DNA replication and repair of damaged DNA. The polypeptide is DNA ligase (Thermotoga maritima (strain ATCC 43589 / DSM 3109 / JCM 10099 / NBRC 100826 / MSB8)).